Consider the following 264-residue polypeptide: Thymidylate synthase (264 aa).

Arginine 21 is a binding site for dUMP. Histidine 51 is a (6R)-5,10-methylene-5,6,7,8-tetrahydrofolate binding site. A dUMP-binding site is contributed by 126–127 (RR). Cysteine 146 (nucleophile) is an active-site residue. DUMP contacts are provided by residues 166–169 (RSCD), asparagine 177, and 207–209 (HLY). Aspartate 169 is a (6R)-5,10-methylene-5,6,7,8-tetrahydrofolate binding site. Alanine 263 lines the (6R)-5,10-methylene-5,6,7,8-tetrahydrofolate pocket.

Belongs to the thymidylate synthase family. Bacterial-type ThyA subfamily. Homodimer.

The protein resides in the cytoplasm. It catalyses the reaction dUMP + (6R)-5,10-methylene-5,6,7,8-tetrahydrofolate = 7,8-dihydrofolate + dTMP. It functions in the pathway pyrimidine metabolism; dTTP biosynthesis. Its function is as follows. Catalyzes the reductive methylation of 2'-deoxyuridine-5'-monophosphate (dUMP) to 2'-deoxythymidine-5'-monophosphate (dTMP) while utilizing 5,10-methylenetetrahydrofolate (mTHF) as the methyl donor and reductant in the reaction, yielding dihydrofolate (DHF) as a by-product. This enzymatic reaction provides an intracellular de novo source of dTMP, an essential precursor for DNA biosynthesis. This Shewanella putrefaciens (strain CN-32 / ATCC BAA-453) protein is Thymidylate synthase.